A 591-amino-acid polypeptide reads, in one-letter code: Probable acetolactate synthase large subunit (591 aa).

Position 47 (Glu47) interacts with thiamine diphosphate. FAD-binding positions include Arg149, 258–279 (HGTK…IGCR), and 301–320 (DIDP…IVGD). The thiamine pyrophosphate binding stretch occupies residues 396–476 (QNQMWMAHFF…VVICIFDNRT (81 aa)). Mg(2+) contacts are provided by Asp447 and Asn474.

Belongs to the TPP enzyme family. Dimer of large and small chains. Mg(2+) serves as cofactor. Requires thiamine diphosphate as cofactor.

It carries out the reaction 2 pyruvate + H(+) = (2S)-2-acetolactate + CO2. It functions in the pathway amino-acid biosynthesis; L-isoleucine biosynthesis; L-isoleucine from 2-oxobutanoate: step 1/4. Its pathway is amino-acid biosynthesis; L-valine biosynthesis; L-valine from pyruvate: step 1/4. The sequence is that of Probable acetolactate synthase large subunit (ilvB) from Methanocaldococcus jannaschii (strain ATCC 43067 / DSM 2661 / JAL-1 / JCM 10045 / NBRC 100440) (Methanococcus jannaschii).